A 208-amino-acid polypeptide reads, in one-letter code: Putative 3-methyladenine DNA glycosylase (208 aa).

The disordered stretch occupies residues M1 to E20.

This sequence belongs to the DNA glycosylase MPG family.

The chain is Putative 3-methyladenine DNA glycosylase from Mesorhizobium japonicum (strain LMG 29417 / CECT 9101 / MAFF 303099) (Mesorhizobium loti (strain MAFF 303099)).